The sequence spans 75 residues: UPF0346 protein LGAS_0911 (75 aa).

This sequence belongs to the UPF0346 family.

The chain is UPF0346 protein LGAS_0911 from Lactobacillus gasseri (strain ATCC 33323 / DSM 20243 / BCRC 14619 / CIP 102991 / JCM 1131 / KCTC 3163 / NCIMB 11718 / NCTC 13722 / AM63).